Consider the following 538-residue polypeptide: Endoglucanase 16 (538 aa).

Residues 1–26 (MRWRRVGDVVAVALLLGAAAAAAAAA) form the signal peptide. The active-site Nucleophile is Asp-83. Active-site residues include His-431, Asp-483, and Glu-492. The interval 513–538 (RQESPSTTTTTTATTSSPEMGLSVNR) is disordered. The span at 516–530 (SPSTTTTTTATTSSP) shows a compositional bias: low complexity.

The protein belongs to the glycosyl hydrolase 9 (cellulase E) family.

It localises to the secreted. It catalyses the reaction Endohydrolysis of (1-&gt;4)-beta-D-glucosidic linkages in cellulose, lichenin and cereal beta-D-glucans.. This is Endoglucanase 16 from Oryza sativa subsp. japonica (Rice).